Reading from the N-terminus, the 355-residue chain is MLATDRTTLAQFLVEECRGRAGDDSELLGLLLDVAQACKTISKMTAMGSLAGVHGYNGDVNPQGENQARLDLMSNQAFVRATERTGHAAGLASEEMEEVLGFPESYARGTLLLVFDPLDGSSNIDINGTVGSIFSILPMPRPGEAPQTADFLQSGRQQVAAGYALYGPSTMFVLTIGSGVHGFTLDPLLGDFILTHPSMTVIPESGEFAINSSNSRFWEPPIRAYVDELLAGRSGPRSKDYNMRWIAALVADVHRILLRGGIYLYPRDTKTPDLAGRLRLLYEAAPVAFLMEQAGGRCTTGTRTMLDLVPGSLHERVPLIFGSAVEVERVETLYREPQRREFATPLFNQRGLFRD.

The Mg(2+) site is built by E94, D116, L118, and D119. Substrate-binding positions include 119–122 (DGSS), N211, and 263–265 (YLY). Position 283 (E283) interacts with Mg(2+).

This sequence belongs to the FBPase class 1 family. As to quaternary structure, homotetramer. Mg(2+) serves as cofactor.

The protein localises to the cytoplasm. The enzyme catalyses beta-D-fructose 1,6-bisphosphate + H2O = beta-D-fructose 6-phosphate + phosphate. Its pathway is carbohydrate biosynthesis; Calvin cycle. The protein is Fructose-1,6-bisphosphatase class 1 of Rhodospirillum rubrum (strain ATCC 11170 / ATH 1.1.1 / DSM 467 / LMG 4362 / NCIMB 8255 / S1).